A 92-amino-acid polypeptide reads, in one-letter code: Protein LSO2 (92 aa).

Composition is skewed to basic and acidic residues over residues 1–10 (MGKRFSESAA) and 38–72 (EASKWEQGSRKENAKKLEEEQKRQEKARAKKERDA). Residues 1-92 (MGKRFSESAA…KGGKGKRKMK (92 aa)) are disordered. A coiled-coil region spans residues 17–80 (ARKRDQAHAK…DALLTAEEEQ (64 aa)).

The protein belongs to the CCDC124 family. In terms of assembly, associates with translationally inactive ribosomes in the nonrotated state. LSO2 bridges the decoding sites of the small with the GTPase activating center (GAC) of the large subunit. This position allows accommodation of the DOM34-dependent ribosome recycling system, which splits LSO2-containing ribosomes.

The protein resides in the nucleus. The protein localises to the cytoplasm. In terms of biological role, ribosome-binding protein involved in ribosome hibernation by associating with translationally inactive ribosomes. Required for translational recovery after starvation from stationary phase. May facilitate rapid translation reactivation by stabilizing the recycling-competent state of inactive ribosomes. The polypeptide is Protein LSO2 (Saccharomyces cerevisiae (strain ATCC 204508 / S288c) (Baker's yeast)).